We begin with the raw amino-acid sequence, 312 residues long: Phospholipid phosphatase 3 (312 aa).

The Cytoplasmic portion of the chain corresponds to 1-33 (MQSYKYDKAIVPESKNGGSPALNNNPRKGGSKR). Phosphoserine is present on serine 19. A helical membrane pass occupies residues 34 to 54 (VLLICLDLFCLFMAALPFLII). Topologically, residues 55–85 (ETSTIKPYRRGFYCNDESIKYPLKVSETIND) are extracellular. The chain crosses the membrane as a helical span at residues 86-106 (AVLCAVGIVIAILRIITGEFY). Residues 107–123 (RIYYLKEKSRSTIQNPY) lie on the Cytoplasmic side of the membrane. Residues 109-110 (YY) carry the Dityrosine basolateral targeting motif motif. The chain crosses the membrane as a helical span at residues 124–144 (VAALYKQVGCFLFGCAISQSF). Residues 145–194 (TDIAKVSIGRLRPHFLSVCDPDFSQINCSEGYIQNYRCRGEDSKVQEARK) are Extracellular-facing. A phosphatase sequence motif I region spans residues 149 to 157 (KVSIGRLRP). Asparagine 171 carries N-linked (GlcNAc...) asparagine glycosylation. The Integrin-binding motif motif lies at 183 to 185 (RGE). The chain crosses the membrane as a helical span at residues 195 to 215 (SFFSGHASFSMFTMLYLVLYL). The tract at residues 197–200 (FSGH) is phosphatase sequence motif II. Histidine 200 acts as the Proton donors in catalysis. Topologically, residues 216–226 (QARFTWRGARL) are cytoplasmic. Residues 227 to 244 (LRPLLQFTLLMMAFYTGL) traverse the membrane as a helical segment. The phosphatase sequence motif III stretch occupies residues 245-256 (SRVSDYKHHPSD). Topologically, residues 245-258 (SRVSDYKHHPSDVL) are extracellular. Histidine 252 functions as the Nucleophile in the catalytic mechanism. A helical transmembrane segment spans residues 259 to 279 (AGFAQGALVACCIVFFVSDLF). A mediates interaction with CTNND1 region spans residues 276-312 (SDLFKTKTTLSLPAPAIRREILSPVDIMDRSNHHNMV). The Cytoplasmic portion of the chain corresponds to 280 to 312 (KTKTTLSLPAPAIRREILSPVDIMDRSNHHNMV).

The protein belongs to the PA-phosphatase related phosphoesterase family. In terms of assembly, forms functional homodimers and homooligomers that are not required for substrate recognition and catalytic activity. Can also form heterooligomers with other PLPP2 and PLPP3. Interacts with CTNND1; negatively regulates the PLPP3-mediated stabilization of beta-catenin/CTNNB1. N-glycosylated. Contains high-mannose oligosaccharides. Detected in epithelial cells of intestinal mucosa, lung, liver and brain.

The protein resides in the cell membrane. Its subcellular location is the basolateral cell membrane. The protein localises to the endoplasmic reticulum membrane. It localises to the endoplasmic reticulum-Golgi intermediate compartment membrane. It is found in the golgi apparatus membrane. The protein resides in the golgi apparatus. Its subcellular location is the trans-Golgi network membrane. The protein localises to the membrane raft. It carries out the reaction a 1,2-diacyl-sn-glycero-3-phosphate + H2O = a 1,2-diacyl-sn-glycerol + phosphate. The enzyme catalyses 1,2-dihexadecanoyl-sn-glycero-3-phosphate + H2O = 1,2-dihexadecanoyl-sn-glycerol + phosphate. The catalysed reaction is 1,2-di-(9Z-octadecenoyl)-sn-glycero-3-phosphate + H2O = 1,2-di-(9Z-octadecenoyl)-sn-glycerol + phosphate. It catalyses the reaction a monoacyl-sn-glycero-3-phosphate + H2O = a monoacylglycerol + phosphate. It carries out the reaction (9Z)-octadecenoyl-sn-glycero-3-phosphate + H2O = (9Z-octadecenoyl)-glycerol + phosphate. The enzyme catalyses sphing-4-enine 1-phosphate + H2O = sphing-4-enine + phosphate. The catalysed reaction is an N-acylsphing-4-enine 1-phosphate + H2O = an N-acylsphing-4-enine + phosphate. It catalyses the reaction N-(octanoyl)-sphing-4-enine-1-phosphate + H2O = N-octanoylsphing-4-enine + phosphate. It carries out the reaction N-(9Z-octadecenoyl)-ethanolamine phosphate + H2O = N-(9Z-octadecenoyl) ethanolamine + phosphate. It participates in lipid metabolism; phospholipid metabolism. With respect to regulation, magnesium-independent phospholipid phosphatase. Insensitive to N-ethylmaleimide. Inhibited by sphingosine, zinc ions and modestly by propanolol. Functionally, magnesium-independent phospholipid phosphatase of the plasma membrane that catalyzes the dephosphorylation of a variety of glycerolipid and sphingolipid phosphate esters including phosphatidate/PA, lysophosphatidate/LPA, diacylglycerol pyrophosphate/DGPP, sphingosine 1-phosphate/S1P and ceramide 1-phosphate/C1P. Also acts on N-oleoyl ethanolamine phosphate/N-(9Z-octadecenoyl)-ethanolamine phosphate, a potential physiological compound. Has both an extracellular and an intracellular phosphatase activity, allowing the hydrolysis and the cellular uptake of these bioactive lipid mediators from the milieu, regulating signal transduction in different cellular processes. Through the dephosphorylation of extracellular sphingosine-1-phosphate and the regulation of its extra- and intracellular availability, plays a role in vascular homeostasis, regulating endothelial cell migration, adhesion, survival, proliferation and the production of pro-inflammatory cytokines. By maintaining the appropriate levels of this lipid in the cerebellum, also ensure its proper development and function. Through its intracellular lipid phosphatase activity may act in early compartments of the secretory pathway, regulating the formation of Golgi to endoplasmic reticulum retrograde transport carriers. In terms of biological role, independently of this phosphatase activity may also function in the Wnt signaling pathway and the stabilization of beta-catenin/CTNNB1, thereby regulating cell proliferation, migration and differentiation in angiogenesis or yet in tumor growth. Also plays a role in integrin-mediated cell-cell adhesion in angiogenesis. This Rattus norvegicus (Rat) protein is Phospholipid phosphatase 3.